The primary structure comprises 167 residues: uncharacterized protein (167 aa).

This is an uncharacterized protein from Xenopus laevis (African clawed frog).